The primary structure comprises 417 residues: Cytochrome b-c1 complex subunit 2, mitochondrial (417 aa).

The N-terminal 22 residues, 1–22 (MTRGVPRLAVAARHFSTAEAAG), are a transit peptide targeting the mitochondrion.

The protein belongs to the peptidase M16 family. UQCRC2/QCR2 subfamily. In terms of assembly, component of the ubiquinol-cytochrome c oxidoreductase (cytochrome b-c1 complex, complex III, CIII), a multisubunit enzyme composed of 3 respiratory subunits cytochrome b, cytochrome c1 and Rieske protein, 2 core protein subunits, and additional low-molecular weight protein subunits. The complex exists as an obligatory dimer and forms supercomplexes (SCs) in the inner mitochondrial membrane with cytochrome c oxidase (complex IV, CIV).

The protein resides in the mitochondrion inner membrane. Functionally, component of the ubiquinol-cytochrome c oxidoreductase, a multisubunit transmembrane complex that is part of the mitochondrial electron transport chain which drives oxidative phosphorylation. The respiratory chain contains 3 multisubunit complexes succinate dehydrogenase (complex II, CII), ubiquinol-cytochrome c oxidoreductase (cytochrome b-c1 complex, complex III, CIII) and cytochrome c oxidase (complex IV, CIV), that cooperate to transfer electrons derived from NADH and succinate to molecular oxygen, creating an electrochemical gradient over the inner membrane that drives transmembrane transport and the ATP synthase. The cytochrome b-c1 complex catalyzes electron transfer from ubiquinol to cytochrome c, linking this redox reaction to translocation of protons across the mitochondrial inner membrane, with protons being carried across the membrane as hydrogens on the quinol. In the process called Q cycle, 2 protons are consumed from the matrix, 4 protons are released into the intermembrane space and 2 electrons are passed to cytochrome c. The sequence is that of Cytochrome b-c1 complex subunit 2, mitochondrial (QCR2) from Yarrowia lipolytica (strain CLIB 122 / E 150) (Yeast).